The following is a 542-amino-acid chain: L-ornithine N(5)-monooxygenase (542 aa).

Residues glutamate 45–histidine 53 and glutamine 64 each bind FAD. Position 69 (lysine 69) interacts with substrate. An NADP(+)-binding site is contributed by serine 218–serine 221. Substrate is bound by residues asparagine 263–phenylalanine 266 and asparagine 294. NADP(+) is bound at residue asparagine 294–serine 296. The tract at residues phenylalanine 443–proline 472 is disordered. Positions serine 447–proline 472 are enriched in low complexity. Threonine 518 to leucine 520 lines the FAD pocket. Serine 521 provides a ligand contact to substrate.

The protein belongs to the lysine N(6)-hydroxylase/L-ornithine N(5)-oxygenase family. As to quaternary structure, homotetramer. The cofactor is FAD.

The enzyme catalyses L-ornithine + NADPH + O2 = N(5)-hydroxy-L-ornithine + NADP(+) + H2O. It carries out the reaction L-ornithine + NADH + O2 = N(5)-hydroxy-L-ornithine + NAD(+) + H2O. It functions in the pathway siderophore biosynthesis. Its function is as follows. L-ornithine N(5)-monooxygenase; part of the gene cluster that mediates the biosynthesis of coprinoferrin, an acylated tripeptide hydroxamate siderophore. The biosynthesis of coprinoferrin depends on the hydroxylation of ornithine to N(5)-hydroxyornithine, catalyzed by the monooxygenase cpf2. The second step, the acylation of N(5)-hydroxy-L-ornithine to yield N(5)-hexanoyl-N(5)-hydroxyl-L-ornithine is catalyzed by a not yet identified acyltransferase. Finally, assembly of coprinoferrin is catalyzed by the nonribosomal peptide synthase (NRPS) cpf1 via amide bond formation between three N(5)-hexanoyl-N(5)-hydroxyl-L-ornithine molecules to release the linear trimer. Interestingly, proteins seemingly not directly related to biosynthesis, such as transcription factors, replication factors, and autophagy-related proteins, are conserved among the clusters homologous to the coprinoferrin cluster, suggesting that the cluster may also play developmental and cell biological functions. This chain is L-ornithine N(5)-monooxygenase, found in Coprinopsis cinerea (strain Okayama-7 / 130 / ATCC MYA-4618 / FGSC 9003) (Inky cap fungus).